The sequence spans 694 residues: Elongation factor G (694 aa).

The 280-residue stretch at 8–287 folds into the tr-type G domain; the sequence is EDYRNFGIMA…AVISYLPSPV (280 aa). Residues 17–24, 86–90, and 140–143 each bind GTP; these read AHIDAGKT, DTPGH, and NKMD.

Belongs to the TRAFAC class translation factor GTPase superfamily. Classic translation factor GTPase family. EF-G/EF-2 subfamily.

It localises to the cytoplasm. Its function is as follows. Catalyzes the GTP-dependent ribosomal translocation step during translation elongation. During this step, the ribosome changes from the pre-translocational (PRE) to the post-translocational (POST) state as the newly formed A-site-bound peptidyl-tRNA and P-site-bound deacylated tRNA move to the P and E sites, respectively. Catalyzes the coordinated movement of the two tRNA molecules, the mRNA and conformational changes in the ribosome. This Bartonella quintana (strain Toulouse) (Rochalimaea quintana) protein is Elongation factor G.